The sequence spans 94 residues: Large ribosomal subunit protein eL42 (94 aa).

Positions 11, 14, 70, and 73 each coordinate Zn(2+). The C4-type zinc finger occupies 11-73 (CPYCKKHTIH…IDLRFKCTEC (63 aa)).

The protein belongs to the eukaryotic ribosomal protein eL42 family. In terms of assembly, part of the 50S ribosomal subunit. Zn(2+) is required as a cofactor.

Its function is as follows. Binds to the 23S rRNA. This Methanocaldococcus jannaschii (strain ATCC 43067 / DSM 2661 / JAL-1 / JCM 10045 / NBRC 100440) (Methanococcus jannaschii) protein is Large ribosomal subunit protein eL42.